Consider the following 160-residue polypeptide: Eukaryotic translation initiation factor 5A-1/2 (160 aa).

The span at 1-12 (MSDEEHHFESKA) shows a compositional bias: basic and acidic residues. Positions 1 to 21 (MSDEEHHFESKADAGASKTYP) are disordered. Residue Lys52 is modified to Hypusine.

This sequence belongs to the eIF-5A family. Lys-52 undergoes hypusination, a unique post-translational modification that consists in the addition of a butylamino group from spermidine to lysine side chain, leading to the formation of the unusual amino acid hypusine. eIF-5As are the only known proteins to undergo this modification, which is essential for their function.

In terms of biological role, translation factor that promotes translation elongation and termination, particularly upon ribosome stalling at specific amino acid sequence contexts. Binds between the exit (E) and peptidyl (P) site of the ribosome and promotes rescue of stalled ribosome: specifically required for efficient translation of polyproline-containing peptides as well as other motifs that stall the ribosome. Acts as a ribosome quality control (RQC) cofactor by joining the RQC complex to facilitate peptidyl transfer during CAT tailing step. In Solanum tuberosum (Potato), this protein is Eukaryotic translation initiation factor 5A-1/2 (EIF5A1).